Consider the following 961-residue polypeptide: Alanine--tRNA ligase, chloroplastic/mitochondrial (961 aa).

Residues His-641, His-645, Cys-743, and His-747 each contribute to the Zn(2+) site.

It belongs to the class-II aminoacyl-tRNA synthetase family. In terms of assembly, monomer. It depends on Zn(2+) as a cofactor.

It is found in the plastid. Its subcellular location is the chloroplast. The protein resides in the mitochondrion. The catalysed reaction is tRNA(Ala) + L-alanine + ATP = L-alanyl-tRNA(Ala) + AMP + diphosphate. Functionally, catalyzes the attachment of alanine to tRNA(Ala) in a two-step reaction: alanine is first activated by ATP to form Ala-AMP and then transferred to the acceptor end of tRNA(Ala). Also edits incorrectly charged tRNA(Ala) via its editing domain. This chain is Alanine--tRNA ligase, chloroplastic/mitochondrial, found in Sorghum bicolor (Sorghum).